The sequence spans 344 residues: Phenylalanine--tRNA ligase alpha subunit (344 aa).

E259 lines the Mg(2+) pocket.

Belongs to the class-II aminoacyl-tRNA synthetase family. Phe-tRNA synthetase alpha subunit type 1 subfamily. As to quaternary structure, tetramer of two alpha and two beta subunits. It depends on Mg(2+) as a cofactor.

The protein localises to the cytoplasm. It carries out the reaction tRNA(Phe) + L-phenylalanine + ATP = L-phenylalanyl-tRNA(Phe) + AMP + diphosphate + H(+). This Petrotoga mobilis (strain DSM 10674 / SJ95) protein is Phenylalanine--tRNA ligase alpha subunit.